The sequence spans 467 residues: UDP-N-acetylmuramate--L-alanine ligase (467 aa).

114–120 (GTHGKTT) provides a ligand contact to ATP.

Belongs to the MurCDEF family.

Its subcellular location is the cytoplasm. It catalyses the reaction UDP-N-acetyl-alpha-D-muramate + L-alanine + ATP = UDP-N-acetyl-alpha-D-muramoyl-L-alanine + ADP + phosphate + H(+). The protein operates within cell wall biogenesis; peptidoglycan biosynthesis. Its function is as follows. Cell wall formation. The protein is UDP-N-acetylmuramate--L-alanine ligase of Rhodopseudomonas palustris (strain BisB18).